Here is a 296-residue protein sequence, read N- to C-terminus: Urease accessory protein UreD (296 aa).

This sequence belongs to the UreD family. UreD, UreF and UreG form a complex that acts as a GTP-hydrolysis-dependent molecular chaperone, activating the urease apoprotein by helping to assemble the nickel containing metallocenter of UreC. The UreE protein probably delivers the nickel.

Its subcellular location is the cytoplasm. Functionally, required for maturation of urease via the functional incorporation of the urease nickel metallocenter. This Methylibium petroleiphilum (strain ATCC BAA-1232 / LMG 22953 / PM1) protein is Urease accessory protein UreD.